The primary structure comprises 213 residues: MSMDSDAKSPFQTAELAFDDPFAAFSQWMEDARGAEPNDPNAMTLATASPSGVPSARIVLLRSVDAAEHPERGFVFFTNTESRKGVEIAANPQVALLFHWKSLGRQIRIEGKAIPVAVEEAESYFHTRPRISRLGARASDQSRPLPDRKTLQKRVEEEEARYPGDDIPRPAYWSGYRVTPTVIEFWQQMPFRLHDRLVFRRQGKNWGQEKLYP.

FMN contacts are provided by residues 57–62 (RIVLLR), 77–78 (FT), R83, K84, and Q106. R62 serves as a coordination point for substrate. Positions 124, 128, and 132 each coordinate substrate. Residues 135-163 (GARASDQSRPLPDRKTLQKRVEEEEARYP) form a disordered region. Residue 141–142 (QS) coordinates FMN. Residues 145–163 (LPDRKTLQKRVEEEEARYP) show a composition bias toward basic and acidic residues. W186 serves as a coordination point for FMN. Position 192 to 194 (192 to 194 (RLH)) interacts with substrate. Position 196 (R196) interacts with FMN.

The protein belongs to the pyridoxamine 5'-phosphate oxidase family. Homodimer. Requires FMN as cofactor.

It catalyses the reaction pyridoxamine 5'-phosphate + O2 + H2O = pyridoxal 5'-phosphate + H2O2 + NH4(+). It carries out the reaction pyridoxine 5'-phosphate + O2 = pyridoxal 5'-phosphate + H2O2. Its pathway is cofactor metabolism; pyridoxal 5'-phosphate salvage; pyridoxal 5'-phosphate from pyridoxamine 5'-phosphate: step 1/1. It functions in the pathway cofactor metabolism; pyridoxal 5'-phosphate salvage; pyridoxal 5'-phosphate from pyridoxine 5'-phosphate: step 1/1. Functionally, catalyzes the oxidation of either pyridoxine 5'-phosphate (PNP) or pyridoxamine 5'-phosphate (PMP) into pyridoxal 5'-phosphate (PLP). In Granulibacter bethesdensis (strain ATCC BAA-1260 / CGDNIH1), this protein is Pyridoxine/pyridoxamine 5'-phosphate oxidase.